The chain runs to 462 residues: 3-isopropylmalate dehydratase large subunit (462 aa).

[4Fe-4S] cluster is bound by residues Cys337, Cys397, and Cys400.

This sequence belongs to the aconitase/IPM isomerase family. LeuC type 1 subfamily. As to quaternary structure, heterodimer of LeuC and LeuD. [4Fe-4S] cluster serves as cofactor.

It carries out the reaction (2R,3S)-3-isopropylmalate = (2S)-2-isopropylmalate. It participates in amino-acid biosynthesis; L-leucine biosynthesis; L-leucine from 3-methyl-2-oxobutanoate: step 2/4. In terms of biological role, catalyzes the isomerization between 2-isopropylmalate and 3-isopropylmalate, via the formation of 2-isopropylmaleate. This chain is 3-isopropylmalate dehydratase large subunit, found in Listeria welshimeri serovar 6b (strain ATCC 35897 / DSM 20650 / CCUG 15529 / CIP 8149 / NCTC 11857 / SLCC 5334 / V8).